Consider the following 89-residue polypeptide: Defensin-like protein 147 (89 aa).

The N-terminal stretch at 1–24 is a signal peptide; that stretch reads MKKIFQLSFTVFIIFISLVLGVVG. Disulfide bonds link cysteine 34–cysteine 82, cysteine 46–cysteine 66, cysteine 51–cysteine 79, and cysteine 55–cysteine 81.

Belongs to the DEFL family. Expressed in flower buds, but not in stems, roots or rosette leaves.

The protein resides in the secreted. The sequence is that of Defensin-like protein 147 (LCR1) from Arabidopsis thaliana (Mouse-ear cress).